A 111-amino-acid polypeptide reads, in one-letter code: Universal stress protein B (111 aa).

The helical transmembrane segment at 1–21 (MISTVSLFWALCVVCIVNMAR) threads the bilayer. The Cytoplasmic segment spans residues 22–89 (YFSSLRALLV…IRRCERVRRQ (68 aa)). A helical membrane pass occupies residues 90-110 (FLLTSALCGLVVVSLIALMIW). His-111 is a topological domain (periplasmic).

It belongs to the universal stress protein B family.

It localises to the cell inner membrane. The sequence is that of Universal stress protein B (uspB) from Salmonella choleraesuis (strain SC-B67).